Consider the following 338-residue polypeptide: Aspartate-semialdehyde dehydrogenase (338 aa).

Residues 13–16 and 41–42 contribute to the NADP(+) site; these read TGAV and RS. Arginine 101 provides a ligand contact to phosphate. The active-site Acyl-thioester intermediate is cysteine 130. Position 157 (glutamine 157) interacts with substrate. 160–161 contributes to the NADP(+) binding site; sequence SG. A phosphate-binding site is contributed by lysine 214. Arginine 236 contacts substrate. The Proton acceptor role is filled by histidine 243. Glutamine 316 is an NADP(+) binding site.

This sequence belongs to the aspartate-semialdehyde dehydrogenase family. As to quaternary structure, homodimer.

The catalysed reaction is L-aspartate 4-semialdehyde + phosphate + NADP(+) = 4-phospho-L-aspartate + NADPH + H(+). The protein operates within amino-acid biosynthesis; L-lysine biosynthesis via DAP pathway; (S)-tetrahydrodipicolinate from L-aspartate: step 2/4. It functions in the pathway amino-acid biosynthesis; L-methionine biosynthesis via de novo pathway; L-homoserine from L-aspartate: step 2/3. It participates in amino-acid biosynthesis; L-threonine biosynthesis; L-threonine from L-aspartate: step 2/5. Its function is as follows. Catalyzes the NADPH-dependent formation of L-aspartate-semialdehyde (L-ASA) by the reductive dephosphorylation of L-aspartyl-4-phosphate. The polypeptide is Aspartate-semialdehyde dehydrogenase (asd) (Synechocystis sp. (strain ATCC 27184 / PCC 6803 / Kazusa)).